The following is a 760-amino-acid chain: Ferric/cupric reductase transmembrane component 1 (760 aa).

The N-terminal stretch at 1-18 is a signal peptide; it reads MKIQQLIVFLFAVVLIDA. The Extracellular portion of the chain corresponds to 19–212; sequence RTPKRYSELD…NNNFNLSINY (194 aa). Residues asparagine 78, asparagine 91, asparagine 111, asparagine 143, asparagine 155, and asparagine 207 are each glycosylated (N-linked (GlcNAc...) asparagine). Positions 119–177 are disordered; the sequence is TTKSSSGSKTSASASKSSKSTGSSNASKSSTNAHGSNSSTSSTSSSSSKSGKGNSGTST. A helical transmembrane segment spans residues 213-233; the sequence is GSGLLGYWAGILAIAIFANMI. Topologically, residues 234–288 are cytoplasmic; it reads KKMFPSLTNYLSGSISNLFRKHLFLPATFRKKKAQEFSIGVYGFFDGLIPTRLET. The chain crosses the membrane as a helical span at residues 289-309; sequence IIVVIFVVLTGLFSALHIHHV. The Extracellular portion of the chain corresponds to 310–324; it reads KDNPQYATKNAELGH. The chain crosses the membrane as a helical span at residues 325–345; the sequence is LIADRTGILGTFLIPLLILFG. Residues 330–445 form the Ferric oxidoreductase domain; that stretch reads TGILGTFLIP…HIVLVVFFVV (116 aa). The Cytoplasmic portion of the chain corresponds to 346 to 371; it reads GRNNFLQWLTGWDFATFIMYHRWISR. Heme contacts are provided by histidine 366 and histidine 380. A helical membrane pass occupies residues 372–392; that stretch reads VDVLLIIVHAITFSVSDKATG. Over 393–403 the chain is Extracellular; that stretch reads KYNTRMKRDFM. The helical transmembrane segment at 404–424 threads the bilayer; that stretch reads IWGTVSTICGGFILFQAMLFF. The Cytoplasmic portion of the chain corresponds to 425-430; it reads RRKCYE. The helical transmembrane segment at 431–451 threads the bilayer; it reads VFFLIHIVLVVFFVVGGYYHL. Heme is bound by residues histidine 436 and histidine 450. Topologically, residues 452 to 760 are extracellular; it reads ESQGYGDFMW…EYHEQLQTWA (309 aa). One can recognise an FAD-binding FR-type domain in the interval 465 to 583; the sequence is AVWAFDRVVR…EGPYGEPSSA (119 aa). 575–578 lines the NADP(+) pocket; sequence GPYG. N-linked (GlcNAc...) asparagine glycosylation occurs at asparagine 615. 726–727 contacts NADP(+); sequence CG. The N-linked (GlcNAc...) asparagine glycan is linked to asparagine 744.

This sequence belongs to the ferric reductase (FRE) family. Requires FAD as cofactor. Heme is required as a cofactor.

The protein resides in the cell membrane. The catalysed reaction is 2 a Fe(II)-siderophore + NADP(+) + H(+) = 2 a Fe(III)-siderophore + NADPH. Ferric reductase responsible for reducing extracellular iron and copper prior to import. Catalyzes the reductive uptake of Fe(3+)-salts and Fe(3+) bound to catecholate or hydroxamate siderophores. Fe(3+) is reduced to Fe(2+), which then dissociates from the siderophore and can be imported by the high-affinity Fe(2+) transport complex in the plasma membrane. Also participates in Cu(2+) reduction and Cu(+) uptake. Involved in maintenance of cell wall integrity (CWI), mitochondrial function, and interaction between the pathogen and the host. This Candida albicans (strain SC5314 / ATCC MYA-2876) (Yeast) protein is Ferric/cupric reductase transmembrane component 1.